Here is a 255-residue protein sequence, read N- to C-terminus: Type III pantothenate kinase (255 aa).

7 to 14 (DVGNTRLK) contacts ATP. Substrate is bound by residues Tyr96 and 103 to 106 (GADR). The active-site Proton acceptor is Asp105. Thr133 contributes to the ATP binding site. A substrate-binding site is contributed by Thr183.

Belongs to the type III pantothenate kinase family. In terms of assembly, homodimer. Requires NH4(+) as cofactor. K(+) is required as a cofactor.

Its subcellular location is the cytoplasm. It catalyses the reaction (R)-pantothenate + ATP = (R)-4'-phosphopantothenate + ADP + H(+). It functions in the pathway cofactor biosynthesis; coenzyme A biosynthesis; CoA from (R)-pantothenate: step 1/5. Its function is as follows. Catalyzes the phosphorylation of pantothenate (Pan), the first step in CoA biosynthesis. The protein is Type III pantothenate kinase of Albidiferax ferrireducens (strain ATCC BAA-621 / DSM 15236 / T118) (Rhodoferax ferrireducens).